Consider the following 401-residue polypeptide: Tyrosine--tRNA ligase (401 aa).

A 'HIGH' region motif is present at residues 45–54; it reads PTAPDLHLGH. Positions 230–234 match the 'KMSKS' region motif; it reads KMSKS. K233 serves as a coordination point for ATP. Positions 339 to 399 constitute an S4 RNA-binding domain; that stretch reads IWLAKALVEC…GKRKFAKLKV (61 aa).

The protein belongs to the class-I aminoacyl-tRNA synthetase family. TyrS type 2 subfamily. As to quaternary structure, homodimer.

It is found in the cytoplasm. The catalysed reaction is tRNA(Tyr) + L-tyrosine + ATP = L-tyrosyl-tRNA(Tyr) + AMP + diphosphate + H(+). Catalyzes the attachment of tyrosine to tRNA(Tyr) in a two-step reaction: tyrosine is first activated by ATP to form Tyr-AMP and then transferred to the acceptor end of tRNA(Tyr). The sequence is that of Tyrosine--tRNA ligase from Campylobacter jejuni subsp. jejuni serotype O:2 (strain ATCC 700819 / NCTC 11168).